The sequence spans 88 residues: Small ribosomal subunit protein uS19 (88 aa).

The protein belongs to the universal ribosomal protein uS19 family.

Its function is as follows. Protein S19 forms a complex with S13 that binds strongly to the 16S ribosomal RNA. In Chlamydia muridarum (strain MoPn / Nigg), this protein is Small ribosomal subunit protein uS19 (rpsS).